Here is a 315-residue protein sequence, read N- to C-terminus: Cobalamin biosynthesis protein CobD (315 aa).

A run of 5 helical transmembrane segments spans residues 54-74, 78-98, 152-172, 203-223, and 295-315; these read GLLFVLTVGMTGVVSWFILFL, IAYWLYVAVFVYLGYTTLAMT, ADGVIAPLFYLFIGGPVLALM, IANFIPARLAWFFLVIASFIL, and LLYTASTIAFIIFASIYLLLF.

This sequence belongs to the CobD/CbiB family.

It localises to the cell membrane. It functions in the pathway cofactor biosynthesis; adenosylcobalamin biosynthesis. Converts cobyric acid to cobinamide by the addition of aminopropanol on the F carboxylic group. This chain is Cobalamin biosynthesis protein CobD, found in Listeria monocytogenes serotype 4b (strain F2365).